A 338-amino-acid polypeptide reads, in one-letter code: D-erythrose-4-phosphate dehydrogenase (338 aa).

11–12 (RI) contacts NAD(+). Substrate-binding positions include 153–155 (SCT), R199, 212–213 (TK), and R235. Catalysis depends on C154, which acts as the Nucleophile. NAD(+) is bound at residue N317.

This sequence belongs to the glyceraldehyde-3-phosphate dehydrogenase family. Epd subfamily. As to quaternary structure, homotetramer.

The protein localises to the cytoplasm. It catalyses the reaction D-erythrose 4-phosphate + NAD(+) + H2O = 4-phospho-D-erythronate + NADH + 2 H(+). Its pathway is cofactor biosynthesis; pyridoxine 5'-phosphate biosynthesis; pyridoxine 5'-phosphate from D-erythrose 4-phosphate: step 1/5. Its function is as follows. Catalyzes the NAD-dependent conversion of D-erythrose 4-phosphate to 4-phosphoerythronate. This is D-erythrose-4-phosphate dehydrogenase from Shewanella sp. (strain MR-4).